The following is a 373-amino-acid chain: tRNA-specific 2-thiouridylase MnmA (373 aa).

ATP-binding positions include 7–14 and leucine 33; that span reads AMSGGVDS. The Nucleophile role is filled by cysteine 101. A disulfide bridge links cysteine 101 with cysteine 215. Glycine 125 is an ATP binding site. Positions 165–167 are interaction with tRNA; sequence KDQ. The Cysteine persulfide intermediate role is filled by cysteine 215.

The protein belongs to the MnmA/TRMU family.

Its subcellular location is the cytoplasm. The enzyme catalyses S-sulfanyl-L-cysteinyl-[protein] + uridine(34) in tRNA + AH2 + ATP = 2-thiouridine(34) in tRNA + L-cysteinyl-[protein] + A + AMP + diphosphate + H(+). In terms of biological role, catalyzes the 2-thiolation of uridine at the wobble position (U34) of tRNA, leading to the formation of s(2)U34. The chain is tRNA-specific 2-thiouridylase MnmA from Roseiflexus sp. (strain RS-1).